The primary structure comprises 360 residues: UDP-N-acetylglucosamine--N-acetylmuramyl-(pentapeptide) pyrophosphoryl-undecaprenol N-acetylglucosamine transferase (360 aa).

Residues 15 to 17 (TGG), Asn127, Arg163, Ser191, Ile249, 268 to 273 (ALTVSE), and Gln293 contribute to the UDP-N-acetyl-alpha-D-glucosamine site.

The protein belongs to the glycosyltransferase 28 family. MurG subfamily.

The protein resides in the cell inner membrane. It carries out the reaction di-trans,octa-cis-undecaprenyl diphospho-N-acetyl-alpha-D-muramoyl-L-alanyl-D-glutamyl-meso-2,6-diaminopimeloyl-D-alanyl-D-alanine + UDP-N-acetyl-alpha-D-glucosamine = di-trans,octa-cis-undecaprenyl diphospho-[N-acetyl-alpha-D-glucosaminyl-(1-&gt;4)]-N-acetyl-alpha-D-muramoyl-L-alanyl-D-glutamyl-meso-2,6-diaminopimeloyl-D-alanyl-D-alanine + UDP + H(+). It functions in the pathway cell wall biogenesis; peptidoglycan biosynthesis. Its function is as follows. Cell wall formation. Catalyzes the transfer of a GlcNAc subunit on undecaprenyl-pyrophosphoryl-MurNAc-pentapeptide (lipid intermediate I) to form undecaprenyl-pyrophosphoryl-MurNAc-(pentapeptide)GlcNAc (lipid intermediate II). The polypeptide is UDP-N-acetylglucosamine--N-acetylmuramyl-(pentapeptide) pyrophosphoryl-undecaprenol N-acetylglucosamine transferase (Proteus mirabilis (strain HI4320)).